Reading from the N-terminus, the 117-residue chain is Large ribosomal subunit protein uL18 (117 aa).

Belongs to the universal ribosomal protein uL18 family. As to quaternary structure, part of the 50S ribosomal subunit; part of the 5S rRNA/L5/L18/L25 subcomplex. Contacts the 5S and 23S rRNAs.

In terms of biological role, this is one of the proteins that bind and probably mediate the attachment of the 5S RNA into the large ribosomal subunit, where it forms part of the central protuberance. The polypeptide is Large ribosomal subunit protein uL18 (Serratia proteamaculans (strain 568)).